Here is a 43-residue protein sequence, read N- to C-terminus: EDLQGTAVQERSAKASDEEEAIRTLLLTNVEFNRPFVLSIYDR.

It belongs to the serpin family. Post-translationally, N-glycosylated with carbohydrates having biantennary side chains. As to expression, plasma.

It is found in the secreted. This chain is Alpha-1-antiproteinase 4, found in Equus caballus (Horse).